We begin with the raw amino-acid sequence, 728 residues long: MNVTSKPGELVPESDVAAIMRGTHGDPFRVLGMHGGGGAPLSVRVFAPQAAEVAVLGQGGEVLAPLERIGAEGFFAGTVPGEEKFPYRLRFVSGPHEWEADDPYRFPEVLGELDEYLLGEGRHYQLYTRLGAHPAEIEGVQGVSFAVWAPNARRVSVVGAFNAWDGRRHPMRKRIGVGVWELFVPGLHTGDLYKYELLGPSGERLPLKSDPLSFAQEAPPATASVVHGLPEAEWHDAGWMQERESRQRRDAPISIYEVHAGSWRQGLDYDALAEELSAYVREMGFTHVEFLPISEHPFTGSWGYQPIGLFAPTARFGPPEGFARLVDRLHRDGIGVILDWVPAHFPSDAHGLANFDGTHLYDHADPRQGFHRDWNTQIYNFGRQEVANFLQASALFWLDRYHVDALRVDAVASMLYLDYSRNAGEWVPNRHGGRENLEAIDFLRGVNERVRLDHPGCITIAEESTAFPQVSRPVEDGGLGFGFKWNMGWMHDTLGYFRRDPIHRKHHQNDLTFGMVYAYSEDFVLPLSHDEVVHGKGSLIGQMAGDRWQKFANLRAYFGFMWAHPGKKLLFMGGEFAQEREWNHDASLDWHLLDDPSHAGMKRLVADLNREYRKRPALHRMDCDPEGFEWIDAGDSENSVLSFLRKAPGEKPVLAVCNLTPVVRSDYRIGVPEGGEWREILNSDAAIYGGSDVGNPGGLQAEEFSWHGRPASLRLTLPPLATIFVTPA.

D409 functions as the Nucleophile in the catalytic mechanism. The active-site Proton donor is E462.

The protein belongs to the glycosyl hydrolase 13 family. GlgB subfamily. In terms of assembly, monomer.

The enzyme catalyses Transfers a segment of a (1-&gt;4)-alpha-D-glucan chain to a primary hydroxy group in a similar glucan chain.. It participates in glycan biosynthesis; glycogen biosynthesis. Functionally, catalyzes the formation of the alpha-1,6-glucosidic linkages in glycogen by scission of a 1,4-alpha-linked oligosaccharide from growing alpha-1,4-glucan chains and the subsequent attachment of the oligosaccharide to the alpha-1,6 position. The protein is 1,4-alpha-glucan branching enzyme GlgB of Cereibacter sphaeroides (strain ATCC 17023 / DSM 158 / JCM 6121 / CCUG 31486 / LMG 2827 / NBRC 12203 / NCIMB 8253 / ATH 2.4.1.) (Rhodobacter sphaeroides).